The chain runs to 302 residues: Glutaminase (302 aa).

Residues Ser-61, Asn-111, Glu-155, Asn-162, Tyr-186, Tyr-238, and Val-256 each coordinate substrate.

The protein belongs to the glutaminase family. Homotetramer.

It catalyses the reaction L-glutamine + H2O = L-glutamate + NH4(+). The sequence is that of Glutaminase from Pseudomonas syringae pv. tomato (strain ATCC BAA-871 / DC3000).